We begin with the raw amino-acid sequence, 808 residues long: Copal-8-ol diphosphate hydratase, chloroplastic (808 aa).

The transit peptide at 1 to 50 (MAFTFTSAHLFLPVTENHSVHVNYSIPPGNWRLWSTAKGGSNKLDIRRLR) directs the protein to the chloroplast. Residues 190–219 (DKCQKGLKFFRDNISKLEKENVEASAQMLS) are a coiled coil. K256 is a binding site for substrate. Mg(2+) contacts are provided by D391 and D393. The short motif at 391–394 (DLDD) is the DXDD motif element. K477 is a substrate binding site.

Belongs to the terpene synthase family. It depends on Mg(2+) as a cofactor. As to expression, expressed in stems, leaves and trichomes. Not detected in roots and seeds. Higher expression in young leaves than in fully expanded leaves.

Its subcellular location is the plastid. It is found in the chloroplast. It carries out the reaction (2E,6E,10E)-geranylgeranyl diphosphate + H2O = 8-hydroxycopalyl diphosphate. It participates in secondary metabolite biosynthesis; terpenoid biosynthesis. Involved in the biosynthesis of oxygen-containing labdane-type diterpenes that may be implicated in direct and indirect defense mechanisms. No activity with geranyl diphosphate or farnesyl diphosphate as substrate. The polypeptide is Copal-8-ol diphosphate hydratase, chloroplastic (Cistus creticus subsp. creticus (Rock rose)).